The following is a 223-amino-acid chain: Neurotrophic factor BDNF precursor form (223 aa).

An N-terminal signal peptide occupies residues 1 to 5 (SCMKA). The propeptide occupies 6–114 (APMKEVSIRG…AANMSMRVRR (109 aa)). N107 is a glycosylation site (N-linked (GlcNAc...) asparagine). Cystine bridges form between C127–C194 and C172–C223.

This sequence belongs to the NGF-beta family.

It localises to the secreted. Functionally, promotes the survival of neuronal populations that are all located either in the central nervous system or directly connected to it. The protein is Neurotrophic factor BDNF precursor form (BDNF) of Eryx johnii (Indian red sand boa).